The sequence spans 312 residues: tRNA dimethylallyltransferase (312 aa).

Position 19 to 26 (19 to 26 (GPSGSGKS)) interacts with ATP. 21–26 (SGSGKS) is a binding site for substrate. The interaction with substrate tRNA stretch occupies residues 44–47 (DSLS).

The protein belongs to the IPP transferase family. Monomer. It depends on Mg(2+) as a cofactor.

It carries out the reaction adenosine(37) in tRNA + dimethylallyl diphosphate = N(6)-dimethylallyladenosine(37) in tRNA + diphosphate. Functionally, catalyzes the transfer of a dimethylallyl group onto the adenine at position 37 in tRNAs that read codons beginning with uridine, leading to the formation of N6-(dimethylallyl)adenosine (i(6)A). The polypeptide is tRNA dimethylallyltransferase (Helicobacter pylori (strain J99 / ATCC 700824) (Campylobacter pylori J99)).